The sequence spans 784 residues: Serine/threonine-protein kinase DCLK2 (784 aa).

A disordered region spans residues 1-45; the sequence is MASTRSIELEHFEERDKRPRPGSRRGAPSSSGGSSSSGPKGNGLI. A compositionally biased stretch (basic and acidic residues) spans 7–19; it reads IELEHFEERDKRP. Positions 24–39 are enriched in low complexity; the sequence is RRGAPSSSGGSSSSGP. A Phosphothreonine modification is found at Thr-61. Doublecortin domains follow at residues 72–158 and 197–280; these read KKAR…VDYT and KLVT…AQDD. Low complexity-rich tracts occupy residues 300 to 312 and 341 to 364; these read AVKYSGSKSPGPS and TPSSQLSTPKSTKSSSSSPTSPGS. The disordered stretch occupies residues 300–368; that stretch reads AVKYSGSKSP…PTSPGSFRGL (69 aa). Position 379 is a phosphoserine (Ser-379). One can recognise a Protein kinase domain in the interval 411 to 668; the sequence is YKIGKVIGDG…AGEILSHPWV (258 aa). Residues 417-425 and Lys-440 contribute to the ATP site; that span reads IGDGNFAVV. The active-site Proton acceptor is the Asp-532. Ser-664 carries the post-translational modification Phosphoserine. Thr-683 is modified (phosphothreonine). The disordered stretch occupies residues 724–784; it reads CQDSSRPGME…RAGTWRRHRD (61 aa). Positions 741–758 are enriched in low complexity; it reads SASAEEPPVSAPAAAPAP.

It belongs to the protein kinase superfamily. CAMK Ser/Thr protein kinase family. CaMK subfamily. Binds to and stabilizes microtubules. Interacts with MAPK8IP1/JIP-1, MAPK8IP2/JIP-2, MAPK9/JNK2, PPP1R9B/NEURABIN-2 and actin. Post-translationally, autophosphorylated.

The protein localises to the cytoplasm. It localises to the cytoskeleton. It catalyses the reaction L-seryl-[protein] + ATP = O-phospho-L-seryl-[protein] + ADP + H(+). It carries out the reaction L-threonyl-[protein] + ATP = O-phospho-L-threonyl-[protein] + ADP + H(+). Functionally, protein kinase with a significantly reduced Ca(2+)/CAM affinity and dependence compared to other members of the CaMK family. May play a role in the down-regulation of CRE-dependent gene activation probably by phosphorylation of the CREB coactivator CRTC2/TORC2 and the resulting retention of TORC2 in the cytoplasm. This chain is Serine/threonine-protein kinase DCLK2 (DCLK2), found in Ailuropoda melanoleuca (Giant panda).